Here is a 161-residue protein sequence, read N- to C-terminus: Regulator of ribonuclease activity A (161 aa).

The protein belongs to the RraA family. In terms of assembly, homotrimer. Binds to both RNA-binding sites in the C-terminal region of Rne and to RhlB.

It is found in the cytoplasm. Its function is as follows. Globally modulates RNA abundance by binding to RNase E (Rne) and regulating its endonucleolytic activity. Can modulate Rne action in a substrate-dependent manner by altering the composition of the degradosome. Modulates RNA-binding and helicase activities of the degradosome. The chain is Regulator of ribonuclease activity A from Shewanella denitrificans (strain OS217 / ATCC BAA-1090 / DSM 15013).